A 169-amino-acid polypeptide reads, in one-letter code: Large ribosomal subunit protein uL10 (169 aa).

This sequence belongs to the universal ribosomal protein uL10 family. Part of the ribosomal stalk of the 50S ribosomal subunit. The N-terminus interacts with L11 and the large rRNA to form the base of the stalk. The C-terminus forms an elongated spine to which L12 dimers bind in a sequential fashion forming a multimeric L10(L12)X complex.

Its function is as follows. Forms part of the ribosomal stalk, playing a central role in the interaction of the ribosome with GTP-bound translation factors. This is Large ribosomal subunit protein uL10 from Rickettsia typhi (strain ATCC VR-144 / Wilmington).